The following is a 353-amino-acid chain: Mitochondrial distribution and morphology protein 10 (353 aa).

The protein belongs to the MDM10 family. In terms of assembly, component of the ER-mitochondria encounter structure (ERMES) or MDM complex, composed of MMM1, MDM10, MDM12 and MDM34. Associates with the mitochondrial outer membrane sorting assembly machinery SAM(core) complex.

It is found in the mitochondrion outer membrane. Functionally, component of the ERMES/MDM complex, which serves as a molecular tether to connect the endoplasmic reticulum and mitochondria. Components of this complex are involved in the control of mitochondrial shape and protein biogenesis and may function in phospholipid exchange. MDM10 is involved in the late assembly steps of the general translocase of the mitochondrial outer membrane (TOM complex). Functions in the TOM40-specific route of the assembly of outer membrane beta-barrel proteins, including the association of TOM40 with the receptor TOM22 and small TOM proteins. Can associate with the SAM(core) complex as well as the MDM12-MMM1 complex, both involved in late steps of the major beta-barrel assembly pathway, that is responsible for biogenesis of all outer membrane beta-barrel proteins. May act as a switch that shuttles between both complexes and channels precursor proteins into the TOM40-specific pathway. Plays a role in mitochondrial morphology and in the inheritance of mitochondria. The chain is Mitochondrial distribution and morphology protein 10 from Yarrowia lipolytica (strain CLIB 122 / E 150) (Yeast).